A 424-amino-acid polypeptide reads, in one-letter code: Adenylosuccinate synthetase (424 aa).

Residues 12–18 (GDEGKGK) and 40–42 (GHT) contribute to the GTP site. The Proton acceptor role is filled by Asp13. Mg(2+) contacts are provided by Asp13 and Gly40. IMP is bound by residues 13–16 (DEGK), 38–41 (NAGH), Thr130, Arg144, Asn220, Thr235, and Arg299. His41 serves as the catalytic Proton donor. 295–301 (VTTGRRR) provides a ligand contact to substrate. GTP is bound by residues Arg301, 327–329 (KLD), and 412–414 (GTG).

The protein belongs to the adenylosuccinate synthetase family. As to quaternary structure, homodimer. Mg(2+) serves as cofactor.

It is found in the cytoplasm. It carries out the reaction IMP + L-aspartate + GTP = N(6)-(1,2-dicarboxyethyl)-AMP + GDP + phosphate + 2 H(+). Its pathway is purine metabolism; AMP biosynthesis via de novo pathway; AMP from IMP: step 1/2. Plays an important role in the de novo pathway and in the salvage pathway of purine nucleotide biosynthesis. Catalyzes the first committed step in the biosynthesis of AMP from IMP. The sequence is that of Adenylosuccinate synthetase from Aspergillus fumigatus (strain CBS 144.89 / FGSC A1163 / CEA10) (Neosartorya fumigata).